The following is a 263-amino-acid chain: MSVTNIPQSHETNEMQHIKNQSHWRVILSSLGIFMATVYPIFMYLVFTKDCFEERHLLRLITLLLPFLYSTIQYLFLLYTNWKNGHKQEDILYNILYYLLNLLLTTFSIISILSIIALIINRRENDDDLFFFSVILPSMPLTYLLSTSCRLVPGQIGFIDTGINIFIDILILSCLVSLTLICIEPKDYLCFIAISSALTLVRLLKKKYLSSKQSPPPTAPWRVAIFVLIFSFVVFIYVLAACGSITALDYHFHLFDKVKSILS.

This sequence belongs to the UPF0328 family.

The protein is UPF0328 protein ECU08_2060 of Encephalitozoon cuniculi (strain GB-M1) (Microsporidian parasite).